Consider the following 223-residue polypeptide: Adenylate kinase 4, mitochondrial (223 aa).

15–20 (GSGKGT) serves as a coordination point for a ribonucleoside 5'-triphosphate. The tract at residues 35–64 (SSGHLLRENLKTGTEVGDVAKQYLEKGLLV) is NMP. AMP-binding residues include Ser-36 and Arg-41. Lys-60 is subject to N6-succinyllysine. AMP contacts are provided by residues 62-64 (LLV), 89-92 (GFPR), and Gln-96. An LID region spans residues 125–162 (RRWIHPSSGRVYNLDFNPPQVQGIDDITGEPLVQQEDD). Residues Arg-126 and 135 to 136 (VY) contribute to the a ribonucleoside 5'-triphosphate site. Arg-170 contributes to the AMP binding site. Position 175 is an N6-acetyllysine (Lys-175). N6-acetyllysine; alternate occurs at positions 179 and 186. N6-succinyllysine; alternate is present on residues Lys-179 and Lys-186. Thr-199 serves as a coordination point for a ribonucleoside 5'-triphosphate.

It belongs to the adenylate kinase family. AK3 subfamily. In terms of assembly, monomer. Interacts with SLC25A5/ANT2. In terms of tissue distribution, expressed in kidney, liver, stomach, brain, spinal cord, heart, ovary, oviduct, colon, jejunum, ileum and testis (at protein level). In the brain, expressed in the pyramidal cells of the cerebrum and glial cells in the cerebellum (at protein level). In the heart, expressed by myocytes (at protein level). In the kidney, expressed in the proximal to distal tubule in the cortex and the outer and inner zones of the medulla (at protein level). In the stomach, expressed in stratified squamous epithelia in the forestomach and in the gastric pit and mucus producing cells of the glandular stomach (at protein level). Expressed in epithelial cells of the jejunum, ileum, and colon (at protein level). In the testis, expressed by spermatocytes (at protein level). In the ovaries, expressed by oocytes, follicular epithelial cells, and corpus luteum cells (at protein level). In the oviduct, expressed in the epithelia of the isthmus and the ciliated cells of the ampulla (at protein level). Expressed in the pyramidal cells in the hippocampus.

It is found in the mitochondrion matrix. The catalysed reaction is a ribonucleoside 5'-phosphate + ATP = a ribonucleoside 5'-diphosphate + ADP. It carries out the reaction AMP + ATP = 2 ADP. The enzyme catalyses GTP + AMP = GDP + ADP. It catalyses the reaction CMP + ATP = CDP + ADP. The catalysed reaction is GTP + CMP = CDP + GDP. It carries out the reaction dAMP + ATP = dADP + ADP. The enzyme catalyses dCMP + ATP = dCDP + ADP. It catalyses the reaction a 2'-deoxyribonucleoside 5'-diphosphate + ATP = a 2'-deoxyribonucleoside 5'-triphosphate + ADP. The catalysed reaction is a ribonucleoside 5'-diphosphate + ATP = a ribonucleoside 5'-triphosphate + ADP. It carries out the reaction GDP + ATP = GTP + ADP. The enzyme catalyses CDP + GTP = CTP + GDP. It catalyses the reaction CDP + ATP = CTP + ADP. The catalysed reaction is UDP + ATP = UTP + ADP. It carries out the reaction GTP + UDP = UTP + GDP. The enzyme catalyses dADP + GTP = dATP + GDP. It catalyses the reaction dCDP + GTP = dCTP + GDP. The catalysed reaction is dCDP + ATP = dCTP + ADP. It carries out the reaction dGDP + ATP = dGTP + ADP. The enzyme catalyses dTDP + GTP = dTTP + GDP. It catalyses the reaction dTDP + ATP = dTTP + ADP. Broad-specificity mitochondrial nucleoside phosphate kinase involved in cellular nucleotide homeostasis by catalyzing nucleoside-phosphate interconversions. Similar to other adenylate kinases, preferentially catalyzes the phosphorylation of the nucleoside monophosphate AMP with ATP as phosphate donor to produce ADP. Phosphorylates only AMP when using GTP as phosphate donor. In vitro, can also catalyze the phosphorylation of CMP, dAMP and dCMP and use GTP as an alternate phosphate donor. Moreover, exhibits a diphosphate kinase activity, producing ATP, CTP, GTP, UTP, TTP, dATP, dCTP and dGTP from the corresponding diphosphate substrates with either ATP or GTP as phosphate donors. Plays a role in controlling cellular ATP levels by regulating phosphorylation and activation of the energy sensor protein kinase AMPK. Plays a protective role in the cellular response to oxidative stress. This is Adenylate kinase 4, mitochondrial from Mus musculus (Mouse).